Reading from the N-terminus, the 511-residue chain is MTLSHSALQFWTHLYLWCLLLVPAVLTQQGSHTHAEDRLFKHLFGGYNRWARPVPNTSDVVIVRFGLSIAQLIDVDEKNQMMTTNVWLKQEWNDYKLRWDPAEFGNVTSLRVPSEMIWIPDIVLYNNADGEFAVTHMTKAHLFFTGTVHWVPPAIYKSSCSIDVTFFPFDQQNCKMKFGSWTYDKAKIDLEQMERTVDLKDYWESGEWAIINATGTYNSKKYDCCAEIYPDVTYYFVIRRLPLFYTINLIIPCLLISCLTVLVFYLPSECGEKITLCISVLLSLTVFLLLITEIIPSTSLVIPLIGEYLLFTMIFVTLSIVITVFVLNVHHRSPSTHNMPNWVRVALLGRVPRWLMMNRPLPPMELHGSPDLKLSPSYHWLETNMDAGEREETEEEEEEEDENICVCAGLPDSSMGVLYGHGGLHLRAMEPETKTPSQASEILLSPQIQKALEGVHYIADRLRSEDADSSVKEDWKYVAMVVDRIFLWLFIIVCFLGTIGLFLPPFLAGMI.

Residues M1–T27 form the signal peptide. Topologically, residues Q28–L241 are extracellular. N56 and N106 each carry an N-linked (GlcNAc...) asparagine glycan. C160 and C174 are disulfide-bonded. N-linked (GlcNAc...) asparagine glycosylation is present at N212. An intrachain disulfide couples C224 to C225. Helical transmembrane passes span P242–L266, I274–T292, and Y308–V329. The Cytoplasmic segment spans residues H330–R484. A helical membrane pass occupies residues I485 to L503.

It belongs to the ligand-gated ion channel (TC 1.A.9) family. Acetylcholine receptor (TC 1.A.9.1) subfamily. Alpha-2/CHRNA2 sub-subfamily. Neuronal AChR seems to be composed of two different types of subunits: alpha and non-alpha (beta). CHRNA2/Alpha-2 subunit can be combined to CHRNB2/beta-2 or CHRNB4/beta-4 to give rise to functional receptors. The alpha-2:beta-2 nAChR complex is proposed to be a heteropentamer with two subtypes: LS (low agonist sensitivity) with a (alpha-2)3:(beta-2)2 and HS (high agonist sensitivity) with a (alpha-2)2:(beta-2)3 stoichiometry; the subtypes differ in their subunit binding interfaces which are involved in ligand binding.

The protein localises to the synaptic cell membrane. Its subcellular location is the cell membrane. It catalyses the reaction Ca(2+)(in) = Ca(2+)(out). The enzyme catalyses K(+)(in) = K(+)(out). It carries out the reaction Na(+)(in) = Na(+)(out). Functionally, component of neuronal acetylcholine receptors (nAChRs) that function as pentameric, ligand-gated cation channels with high calcium permeability among other activities. nAChRs are excitatory neurotrasnmitter receptors formed by a collection of nAChR subunits known to mediate synaptic transmission in the nervous system and the neuromuscular junction. Each nAchR subunit confers differential attributes to channel properties, including activation, deactivation and desensitization kinetics, pH sensitivity, cation permeability, and binding to allosteric modulators. CHRNA2 forms heteropentameric neuronal acetylcholine receptors with CHRNB2 and CHRNB4 and plays a role in nicotine dependence. In Rattus norvegicus (Rat), this protein is Neuronal acetylcholine receptor subunit alpha-2 (Chrna2).